We begin with the raw amino-acid sequence, 158 residues long: NAD(P)H-quinone oxidoreductase subunit J, chloroplastic (158 aa).

This sequence belongs to the complex I 30 kDa subunit family. As to quaternary structure, NDH is composed of at least 16 different subunits, 5 of which are encoded in the nucleus.

The protein localises to the plastid. It is found in the chloroplast thylakoid membrane. It catalyses the reaction a plastoquinone + NADH + (n+1) H(+)(in) = a plastoquinol + NAD(+) + n H(+)(out). The catalysed reaction is a plastoquinone + NADPH + (n+1) H(+)(in) = a plastoquinol + NADP(+) + n H(+)(out). Its function is as follows. NDH shuttles electrons from NAD(P)H:plastoquinone, via FMN and iron-sulfur (Fe-S) centers, to quinones in the photosynthetic chain and possibly in a chloroplast respiratory chain. The immediate electron acceptor for the enzyme in this species is believed to be plastoquinone. Couples the redox reaction to proton translocation, and thus conserves the redox energy in a proton gradient. The protein is NAD(P)H-quinone oxidoreductase subunit J, chloroplastic of Helianthus annuus (Common sunflower).